We begin with the raw amino-acid sequence, 348 residues long: S-adenosylmethionine-dependent nucleotide dehydratase RSAD2 (348 aa).

Residues 56–276 form the Radical SAM core domain; the sequence is SATPSSVNYH…LERHSSISCL (221 aa). [4Fe-4S] cluster is bound by residues Cys70, Cys74, and Cys77.

This sequence belongs to the radical SAM superfamily. RSAD2 family. It depends on [4Fe-4S] cluster as a cofactor. Expressed at low levels in spleen and head kidney.

It localises to the endoplasmic reticulum membrane. Interferon-inducible iron-sulfur (4FE-4S) cluster-binding antiviral protein which plays a major role in the cell antiviral state induced by type I and type II interferon. The protein is S-adenosylmethionine-dependent nucleotide dehydratase RSAD2 of Oncorhynchus mykiss (Rainbow trout).